We begin with the raw amino-acid sequence, 578 residues long: 2-succinyl-5-enolpyruvyl-6-hydroxy-3-cyclohexene-1-carboxylate synthase (578 aa).

This sequence belongs to the TPP enzyme family. MenD subfamily. As to quaternary structure, homodimer. Requires Mg(2+) as cofactor. Mn(2+) serves as cofactor. It depends on thiamine diphosphate as a cofactor.

The catalysed reaction is isochorismate + 2-oxoglutarate + H(+) = 5-enolpyruvoyl-6-hydroxy-2-succinyl-cyclohex-3-ene-1-carboxylate + CO2. It functions in the pathway quinol/quinone metabolism; 1,4-dihydroxy-2-naphthoate biosynthesis; 1,4-dihydroxy-2-naphthoate from chorismate: step 2/7. The protein operates within quinol/quinone metabolism; menaquinone biosynthesis. In terms of biological role, catalyzes the thiamine diphosphate-dependent decarboxylation of 2-oxoglutarate and the subsequent addition of the resulting succinic semialdehyde-thiamine pyrophosphate anion to isochorismate to yield 2-succinyl-5-enolpyruvyl-6-hydroxy-3-cyclohexene-1-carboxylate (SEPHCHC). The polypeptide is 2-succinyl-5-enolpyruvyl-6-hydroxy-3-cyclohexene-1-carboxylate synthase (Prosthecochloris aestuarii (strain DSM 271 / SK 413)).